We begin with the raw amino-acid sequence, 375 residues long: Serpin B5 (375 aa).

5 N-linked (GlcNAc...) asparagine glycosylation sites follow: N99, N133, N155, N188, and N361.

It belongs to the serpin family. Ov-serpin subfamily. Interacts with IRF6.

The protein resides in the secreted. Its subcellular location is the extracellular space. In terms of biological role, tumor suppressor. It blocks the growth, invasion, and metastatic properties of mammary tumors. As it does not undergo the S (stressed) to R (relaxed) conformational transition characteristic of active serpins, it exhibits no serine protease inhibitory activity. This is Serpin B5 (SERPINB5) from Plecturocebus moloch (Dusky titi monkey).